Consider the following 348-residue polypeptide: NADH-quinone oxidoreductase subunit H (348 aa).

8 helical membrane passes run isoleucine 21–alanine 41, glycine 87–isoleucine 107, isoleucine 120–glycine 140, isoleucine 166–valine 186, isoleucine 193–phenylalanine 213, asparagine 258–valine 278, leucine 283–phenylalanine 303, and tryptophan 323–leucine 343.

This sequence belongs to the complex I subunit 1 family. As to quaternary structure, NDH-1 is composed of 14 different subunits. Subunits NuoA, H, J, K, L, M, N constitute the membrane sector of the complex.

It is found in the cell inner membrane. The catalysed reaction is a quinone + NADH + 5 H(+)(in) = a quinol + NAD(+) + 4 H(+)(out). Functionally, NDH-1 shuttles electrons from NADH, via FMN and iron-sulfur (Fe-S) centers, to quinones in the respiratory chain. The immediate electron acceptor for the enzyme in this species is believed to be ubiquinone. Couples the redox reaction to proton translocation (for every two electrons transferred, four hydrogen ions are translocated across the cytoplasmic membrane), and thus conserves the redox energy in a proton gradient. This subunit may bind ubiquinone. This is NADH-quinone oxidoreductase subunit H from Rhizorhabdus wittichii (strain DSM 6014 / CCUG 31198 / JCM 15750 / NBRC 105917 / EY 4224 / RW1) (Sphingomonas wittichii).